Reading from the N-terminus, the 469-residue chain is Glutamate--tRNA ligase (469 aa).

A 'HIGH' region motif is present at residues 11-21; that stretch reads PSPTGFIHLGN. Basic and acidic residues predominate over residues 118 to 131; it reads GEKPRYDGTWRPEP. The interval 118–139 is disordered; sequence GEKPRYDGTWRPEPGKVLPEPP. The 'KMSKS' region motif lies at 243–247; it reads KMSKR. K246 provides a ligand contact to ATP.

Belongs to the class-I aminoacyl-tRNA synthetase family. Glutamate--tRNA ligase type 1 subfamily. As to quaternary structure, monomer.

Its subcellular location is the cytoplasm. The catalysed reaction is tRNA(Glu) + L-glutamate + ATP = L-glutamyl-tRNA(Glu) + AMP + diphosphate. Its function is as follows. Catalyzes the attachment of glutamate to tRNA(Glu) in a two-step reaction: glutamate is first activated by ATP to form Glu-AMP and then transferred to the acceptor end of tRNA(Glu). The polypeptide is Glutamate--tRNA ligase (Burkholderia pseudomallei (strain 1106a)).